The primary structure comprises 302 residues: Deoxyhypusine hydroxylase (302 aa).

Residue Met1 is modified to N-acetylmethionine. HEAT-like PBS-type repeat units follow at residues 54-80 (LKHE…VLQD), 87-113 (VRHE…YSTD), 175-201 (ERYR…GLKC), 206-232 (FRHE…TLAR), and 239-265 (VRHE…YITD). Fe cation-binding residues include His56, His89, and Glu90. Residues His208, His241, and Glu242 each coordinate Fe cation.

It belongs to the deoxyhypusine hydroxylase family. Fe(2+) serves as cofactor.

It catalyses the reaction [eIF5A protein]-deoxyhypusine + AH2 + O2 = [eIF5A protein]-hypusine + A + H2O. It functions in the pathway protein modification; eIF5A hypusination. Its function is as follows. Catalyzes the hydroxylation of the N(6)-(4-aminobutyl)-L-lysine intermediate produced by deoxyhypusine synthase/DHPS on a critical lysine of the eukaryotic translation initiation factor 5A/eIF-5A. This is the second step of the post-translational modification of that lysine into an unusual amino acid residue named hypusine. Hypusination is unique to mature eIF-5A factor and is essential for its function. The protein is Deoxyhypusine hydroxylase (Dohh) of Rattus norvegicus (Rat).